Reading from the N-terminus, the 862-residue chain is Piwi-like protein 1 (862 aa).

Residues Met-1 to Ala-13 are compositionally biased toward basic residues. Residues Met-1–Gly-48 are disordered. An Omega-N-methylarginine; by PRMT5; alternate modification is found at Arg-14. Position 14 is a symmetric dimethylarginine; by PRMT5; alternate (Arg-14). At Arg-49 the chain carries Omega-N-methylarginine; by PRMT5. The residue at position 53 (Arg-53) is an Omega-N-methylarginine; alternate. At Arg-53 the chain carries Symmetric dimethylarginine; alternate. The D-box motif lies at Arg-218 to Asn-225. Residues Thr-279 to Gly-392 enclose the PAZ domain. Residues Thr-317–Arg-319 form a required for binding 2'-O-methylated 3'-end of piRNAs region. Arg-371 carries the omega-N-methylarginine; by PRMT5 modification. Residues Ser-480 to Glu-616 form an MID region region. One can recognise a Piwi domain in the interval Ile-556 to His-848. Active-site residues include Asp-633, Glu-671, Asp-703, and His-837.

The protein belongs to the argonaute family. Piwi subfamily. Interacts (via Piwi domain) with DICER1, suggesting that it forms ribonucleoprotein RISC complexes; this interaction is regulated by HSP90AB1 activity. Interacts with MAEL, KIF17, PABPC1, PRMT5 and WDR77. Interacts (when methylated on arginine residues) with TDRD1, TDRKH/TDRD2, RNF17/TDRD4, TDRD6, TDRD7 and TDRD9. Interacts with CLOCK. Interacts with MOV10L1. Interacts with ANAPC10; interaction oly takes place following piRNA-binding. Interacts with RNF8; leading to sequester RNF8 in the cytoplasm. Interacts with Tex19.1 and, probably, Tex19.2. Requires Mg(2+) as cofactor. In terms of processing, ubiquitinated by the anaphase promoting complex/cyclosome (APC/C) in late spermatids, leading to its degradation. Ubiquitination only takes place following piRNA-binding in adult testis. Ubiquitination and degradation in late spermatogenesis by APC/C is probably required to release RNF8 from the cytoplasm and promote histone to protamine exchange by RNF8. Post-translationally, arginine methylation by PRMT5 is required for the interaction with Tudor domain-containing protein (TDRD1, TDRKH/TDRD2, RNF17/TDRD4, TDRD6, TDRD7 and TDRD9) and subsequent localization to the meiotic nuage, also named P granule. Expressed in brain. Expressed in testis, specifically in spermatocytes (at protein level). Only detected in germ lineage cells of adult testis. Expressed in male gonads 2 weeks after birth at the initiation of spermatogenesis, but not expressed in female gonads.

The protein resides in the cytoplasm. Its function is as follows. Endoribonuclease that plays a central role in postnatal germ cells by repressing transposable elements and preventing their mobilization, which is essential for the germline integrity. Acts via the piRNA metabolic process, which mediates the repression of transposable elements during meiosis by forming complexes composed of piRNAs and Piwi proteins and governs the methylation and subsequent repression of transposons. Directly binds methylated piRNAs, a class of 24 to 30 nucleotide RNAs that are generated by a Dicer-independent mechanism and are primarily derived from transposons and other repeated sequence elements. Strongly prefers a uridine in the first position of their guide (g1U preference, also named 1U-bias). Not involved in the piRNA amplification loop, also named ping-pong amplification cycle. Acts as an endoribonuclease that cleaves transposon messenger RNAs. Besides their function in transposable elements repression, piRNAs are probably involved in other processes during meiosis such as translation regulation. Probable component of some RISC complex, which mediates RNA cleavage and translational silencing. Also plays a role in the formation of chromatoid bodies and is required for some miRNAs stability. Required to sequester RNF8 in the cytoplasm until late spermatogenesis; RNF8 being released upon ubiquitination and degradation of PIWIL1. The sequence is that of Piwi-like protein 1 from Mus musculus (Mouse).